The chain runs to 261 residues: Gap junction beta-6 protein (261 aa).

At 1 to 22 the chain is on the cytoplasmic side; the sequence is MDWGTLHTFIGGVNKHSTSIGK. The chain crosses the membrane as a helical span at residues 23 to 45; it reads VWITVIFIFRVMILVVAAQEVWG. Over 46-75 the chain is Extracellular; sequence DEQEDFVCNTLQPGCKNVCYDHFFPVSHIR. The helical transmembrane segment at 76–98 threads the bilayer; the sequence is LWALQLIFVSTPALLVAMHVAYY. The Cytoplasmic portion of the chain corresponds to 99-131; the sequence is RHETTRKFRRGEKRNDFKDIEDIKKQKVRIEGS. A helical membrane pass occupies residues 132 to 154; that stretch reads LWWTYTSSIFFRIIFEAAFMYVF. Residues 155 to 192 lie on the Extracellular side of the membrane; sequence YFLYNGYHLPWVLKCGIDPCPNLVDCFISRPTEKTVFT. A helical transmembrane segment spans residues 193–215; it reads IFMISASVICMLLNVAELCYLLL. Residues 216–261 are Cytoplasmic-facing; that stretch reads KVCFRRSKRAQTQKNHPNHALKESKQNEMNELISDSGQNAITGFPS.

Belongs to the connexin family. Beta-type (group I) subfamily. As to quaternary structure, a connexon is composed of a hexamer of connexins. Interacts with CNST.

The protein resides in the cell membrane. It is found in the cell junction. Its subcellular location is the gap junction. Functionally, one gap junction consists of a cluster of closely packed pairs of transmembrane channels, the connexons, through which materials of low MW diffuse from one cell to a neighboring cell. The sequence is that of Gap junction beta-6 protein (GJB6) from Homo sapiens (Human).